The primary structure comprises 379 residues: 3-dehydroquinate synthase (379 aa).

Residues 67 to 72, 101 to 105, 125 to 126, lysine 138, and lysine 147 contribute to the NAD(+) site; these read PGEKNK, GIVLD, and TT. Zn(2+) is bound by residues glutamate 180, histidine 242, and histidine 258.

This sequence belongs to the sugar phosphate cyclases superfamily. Dehydroquinate synthase family. NAD(+) serves as cofactor. Co(2+) is required as a cofactor. Requires Zn(2+) as cofactor.

It is found in the cytoplasm. The enzyme catalyses 7-phospho-2-dehydro-3-deoxy-D-arabino-heptonate = 3-dehydroquinate + phosphate. The protein operates within metabolic intermediate biosynthesis; chorismate biosynthesis; chorismate from D-erythrose 4-phosphate and phosphoenolpyruvate: step 2/7. Catalyzes the conversion of 3-deoxy-D-arabino-heptulosonate 7-phosphate (DAHP) to dehydroquinate (DHQ). This Chlamydia felis (strain Fe/C-56) (Chlamydophila felis) protein is 3-dehydroquinate synthase.